We begin with the raw amino-acid sequence, 220 residues long: MAILFAVVARGTTILAKHAWCGGNFLEVTEQILAKIPSENNKLTYSHGNYLFHYICQDRIVYLCITDDDFERSRAFNFLNEIKKRFQTTYGSRAQTALPYAMNSEFSSVLAAQLKHHSENKGLDKVMETQAQVDELKGIMVRNIDLVAQRGERLELLIDKTENLVDSSVTFKTTSRNLARAMCMKNLKLTIIIIIVSIVFIYIIVSPLCGGFTWPSCVKK.

At A2 the chain carries N-acetylalanine; partial. Topologically, residues 2–188 are cytoplasmic; it reads AILFAVVARG…ARAMCMKNLK (187 aa). Residues 7–110 form the Longin domain; that stretch reads VVARGTTILA…AMNSEFSSVL (104 aa). The region spanning 125–185 is the v-SNARE coiled-coil homology domain; the sequence is KVMETQAQVD…RNLARAMCMK (61 aa). Phosphoserine occurs at positions 167 and 168. Residues 189 to 209 form a helical; Anchor for type IV membrane protein membrane-spanning segment; that stretch reads LTIIIIIVSIVFIYIIVSPLC. The Vesicular segment spans residues 210–220; it reads GGFTWPSCVKK.

This sequence belongs to the synaptobrevin family. As to quaternary structure, component of the SNARE complex composed of STX4, SNAP23 and VAMP7 that binds SYT7 during lysosomal exocytosis. Component of the SNARE complex composed of STX7, STX8, VAMP7 and VTI1B that is required for heterotypic fusion of late endosomes with lysosomes. May interact with STX17. Interacts with PICALM. Interacts with RAB21. In terms of tissue distribution, detected in all tissues tested.

It localises to the cytoplasmic vesicle. The protein localises to the secretory vesicle membrane. It is found in the golgi apparatus. The protein resides in the trans-Golgi network membrane. Its subcellular location is the late endosome membrane. It localises to the lysosome membrane. The protein localises to the endoplasmic reticulum membrane. It is found in the phagosome membrane. The protein resides in the synapse. Its subcellular location is the synaptosome. Its function is as follows. Involved in the targeting and/or fusion of transport vesicles to their target membrane during transport of proteins from the early endosome to the lysosome. Required for heterotypic fusion of late endosomes with lysosomes and homotypic lysosomal fusion. Required for calcium regulated lysosomal exocytosis. Involved in the export of chylomicrons from the endoplasmic reticulum to the cis Golgi. Required for exocytosis of mediators during eosinophil and neutrophil degranulation, and target cell killing by natural killer cells. Required for focal exocytosis of late endocytic vesicles during phagosome formation. The sequence is that of Vesicle-associated membrane protein 7 (VAMP7) from Homo sapiens (Human).